A 376-amino-acid polypeptide reads, in one-letter code: 26S proteasome non-ATPase regulatory subunit 13 (376 aa).

In terms of domain architecture, PCI spans 171–338 (SYYKDALRFL…KRVHMTWVQP (168 aa)). Position 298 is an N6-acetyllysine (Lys-298).

It belongs to the proteasome subunit S11 family. In terms of assembly, component of the 19S proteasome regulatory particle complex. The 26S proteasome consists of a 20S core particle (CP) and two 19S regulatory subunits (RP). The regulatory particle is made of a lid composed of 9 subunits including PSMD13, a base containing 6 ATPases and few additional components.

Component of the 26S proteasome, a multiprotein complex involved in the ATP-dependent degradation of ubiquitinated proteins. This complex plays a key role in the maintenance of protein homeostasis by removing misfolded or damaged proteins, which could impair cellular functions, and by removing proteins whose functions are no longer required. Therefore, the proteasome participates in numerous cellular processes, including cell cycle progression, apoptosis, or DNA damage repair. The chain is 26S proteasome non-ATPase regulatory subunit 13 (PSMD13) from Homo sapiens (Human).